A 527-amino-acid chain; its full sequence is Butyrophilin subfamily 2 member A1 (527 aa).

Residues 1–28 form the signal peptide; sequence MESAAALHFSRPASLLLLLLSLCALVSA. In terms of domain architecture, Ig-like V-type spans 29-141; sequence QFIVVGPTDP…SYDEAILHLV (113 aa). The Extracellular portion of the chain corresponds to 29 to 248; the sequence is QFIVVGPTDP…SFMPSVSPCA (220 aa). Residues N46, N114, and N120 are each glycosylated (N-linked (GlcNAc...) asparagine). A disulfide bridge connects residues C51 and C125. Residues 249-269 form a helical membrane-spanning segment; the sequence is VALPIIVVILMIPIAVCIYWI. At 270–527 the chain is on the cytoplasmic side; sequence NKLQKEKKIL…LHRVGTHQSL (258 aa). Residues 310-506 enclose the B30.2/SPRY domain; the sequence is VKEKLQEELR…IFICPALTGA (197 aa).

Belongs to the immunoglobulin superfamily. BTN/MOG family. In terms of tissue distribution, highly expressed in brain, bone marrow, small intestine, muscle, spleen and pancreas. Moderate expression was seen in lung, liver and kidney.

The protein localises to the membrane. The protein is Butyrophilin subfamily 2 member A1 (BTN2A1) of Homo sapiens (Human).